A 1278-amino-acid polypeptide reads, in one-letter code: Sterol regulatory element-binding protein cleavage-activating protein (1278 aa).

Residues 1 to 18 are Cytoplasmic-facing; sequence MTLTERLREKISQAFYNH. A helical membrane pass occupies residues 19-39; sequence GLFCASYPIPIILFTGLCILA. Residues 40–279 lie on the Lumenal side of the membrane; sequence CCYPLLKLPL…SLVHVHFKEE (240 aa). Residues 46 to 284 form a loop-1 region; sequence KLPLPGTGPV…HFKEEIGIAE (239 aa). The tract at residues 60–80 is disordered; it reads PVKDYSPPPLTSDHKPGEPNE. Residue N263 is glycosylated (N-linked (GlcNAc...) asparagine). Residues 280 to 300 form a helical membrane-spanning segment; it reads IGIAELIPLVTTYIILFAYIY. The SSD domain maps to 284–442; that stretch reads ELIPLVTTYI…MLFFTTVLSI (159 aa). Residues 301-312 lie on the Cytoplasmic side of the membrane; the sequence is FSTRKIDMVKSK. The chain crosses the membrane as a helical span at residues 313–333; sequence WGLALAAVVTVLSSLLMSVGL. At 334 to 344 the chain is on the lumenal side; it reads CTLFGLTPTLN. The chain crosses the membrane as a helical span at residues 345-365; sequence GGEIFPYLVVVIGLENVLVLT. Residues 366–401 lie on the Cytoplasmic side of the membrane; that stretch reads KSVVSTPVDLEVKLRIAQGLSSESWSIMKNMATELG. A helical transmembrane segment spans residues 402–422; sequence IVLIGYFTLVPAIQEFCLFAV. A topological domain (lumenal) is located at residue V423. A helical membrane pass occupies residues 424-444; that stretch reads GLVSDFFLQMLFFTTVLSIDI. The Cytoplasmic segment spans residues 445 to 518; it reads RRMELADLNK…FLARTRLAQR (74 aa). Residues 447-452 carry the ER export signal motif; it reads MELADL. Residues K454 and K466 each participate in a glycyl lysine isopeptide (Lys-Gly) (interchain with G-Cter in ubiquitin) cross-link. The helical transmembrane segment at 519 to 539 threads the bilayer; that stretch reads LIMAGTVVWIGILVYTDPAGL. A loop-7 region spans residues 535–710; sequence DPAGLRTYLA…QAQRDLTLYK (176 aa). At 540–707 the chain is on the lumenal side; that stretch reads RTYLAAQVTE…GTAQAQRDLT (168 aa). The tract at residues 581–618 is disordered; the sequence is PPDASKLPENQTLPGEPPEPGGLAEGVHDSPAPEVTWG. Residues N590 and N641 are each glycosylated (N-linked (GlcNAc...) asparagine). The segment at 668–696 is disordered; it reads EGRHPQDGRSAWPPPRPGQGGLWEAGPKG. A helical membrane pass occupies residues 708–728; the sequence is LYKVAALGLASGIVLVLLLLC. The Cytoplasmic portion of the chain corresponds to 729-1278; sequence LYRVLCPRNY…YVPSVLEKLD (550 aa). Positions 731-1278 are interaction with SREBF2; the sequence is RVLCPRNYGQ…YVPSVLEKLD (548 aa). A WD 1 repeat occupies 771–811; that stretch reads VLRGHLMDIECLASDGMLLVSCCLAGHVCVWDAQTGDCLTR. S821, S837, S850, S905, and S935 each carry phosphoserine. Residues 834-904 are disordered; that stretch reads ERLSDGGKGG…RYRAGRRAQD (71 aa). WD repeat units lie at residues 951–1001 and 1004–1041; these read PPEK…LRCS and EVSS…ALSP. R1050 carries the post-translational modification Omega-N-methylarginine. WD repeat units follow at residues 1076–1113, 1116–1154, 1157–1194, and 1196–1234; these read AHQK…CLFT, GHSG…RVSH, AHRG…KLYS, and QQDL…LLQT.

The protein belongs to the WD repeat SCAP family. In terms of assembly, membrane region forms a homotetramer. Component of the SCAP-SREBP complex (composed of SCAP and SREBF1/SREBP1 or SREBF2/SREBP2); interacts with SREBF1/SREBP1 or SREBF2/SREBP2 through its C-terminal cytoplasmic domain. Forms a ternary complex with INSIG1 or INSIG2 through its transmembrane domains at high sterol concentrations. Interacts with PAQR3; the interaction anchors the SCAP-SREBP complex to the Golgi apparatus in low cholesterol conditions. Interacts with the SEC23-SEC24 complex in a SAR1-GTP-dependent manner through an ER export signal in its third cytoplasmic loop. Interacts with RNF139; the interaction inhibits the interaction of SCAP with SEC24B and hampering the ER to Golgi transport of the SCAP-SREBP complex. Interacts with SPRING1. In terms of processing, ubiquitinated at Lys-454 and Lys-466. RNF145 triggers ubiquitination of SCAP, likely inhibiting SCAP-SREBP complex transport to the Golgi apparatus and the subsequent processing/maturation of SREBF2/SREBP2.

The protein localises to the endoplasmic reticulum membrane. It localises to the golgi apparatus membrane. It is found in the cytoplasmic vesicle. Its subcellular location is the COPII-coated vesicle membrane. Escort protein required for cholesterol as well as lipid homeostasis. Regulates export of the SCAP-SREBP complex from the endoplasmic reticulum to the Golgi upon low cholesterol, thereby regulating the processing of sterol regulatory element-binding proteins (SREBPs) SREBF1/SREBP1 and SREBF2/SREBP2. At high sterol concentrations, formation of a ternary complex with INSIG (INSIG1 or INSIG2) leads to mask the ER export signal in SCAP, promoting retention of the complex in the endoplasmic reticulum. Low sterol concentrations trigger release of INSIG, a conformational change in the SSD domain of SCAP, unmasking of the ER export signal, promoting recruitment into COPII-coated vesicles and transport of the SCAP-SREBP to the Golgi: in the Golgi, SREBPs are then processed, releasing the transcription factor fragment of SREBPs from the membrane, its import into the nucleus and up-regulation of LDLR, INSIG1 and the mevalonate pathway. Binds cholesterol via its SSD domain. This Bos taurus (Bovine) protein is Sterol regulatory element-binding protein cleavage-activating protein.